The primary structure comprises 232 residues: RNA chaperone ProQ (232 aa).

Residues 105–182 (EAKARVQAQR…REEQHTPVSD (78 aa)) are disordered. Positions 117 to 136 (QQAKKREAAAAAGEKEDAPR) are enriched in basic and acidic residues. The segment covering 137-146 (RERKPRPTTP) has biased composition (basic residues). Positions 147–177 (RRKEGAERKPRAQKPVEKAPKTVKAPREEQH) are enriched in basic and acidic residues.

This sequence belongs to the ProQ family.

The protein resides in the cytoplasm. Functionally, RNA chaperone with significant RNA binding, RNA strand exchange and RNA duplexing activities. May regulate ProP activity through an RNA-based, post-transcriptional mechanism. This chain is RNA chaperone ProQ, found in Shigella flexneri serotype 5b (strain 8401).